Reading from the N-terminus, the 360-residue chain is Probable L-asparaginase 3 (360 aa).

Positions 1 to 16 are cleaved as a signal peptide; the sequence is MWSSIISFLFFSVALC. 3 N-linked (GlcNAc...) asparagine glycosylation sites follow: Asn27, Asn35, and Asn40. Residues 39–359 form the Asparaginase/glutaminase domain; it reads PNVTIFAMGG…QNITDIFSLE (321 aa). Thr49 functions as the O-isoaspartyl threonine intermediate in the catalytic mechanism. The N-linked (GlcNAc...) asparagine glycan is linked to Asn82. A substrate-binding site is contributed by Ser96. N-linked (GlcNAc...) asparagine glycosylation is present at Asn106. 129-130 contacts substrate; it reads TD. Asn144, Asn179, Asn246, Asn302, and Asn351 each carry an N-linked (GlcNAc...) asparagine glycan.

It belongs to the asparaginase 1 family.

It is found in the secreted. It localises to the cell wall. It carries out the reaction L-asparagine + H2O = L-aspartate + NH4(+). This is Probable L-asparaginase 3 from Schizosaccharomyces pombe (strain 972 / ATCC 24843) (Fission yeast).